Here is a 728-residue protein sequence, read N- to C-terminus: MSDRIDRDVINALIAGHFADPFSVLGMHKTTAGLEVRALLPDATDVWVIEPKTGRKLAKLECLDSRGFFSGVIPRRKNFFRYQLAVVWHGQQNLIDDPYRFGPLIQEMDAWLLSEGTHLRPYETLGAHADTMDGVTGTRFSVWAPNARRVSVVGQFNYWDGRRHPMRLRKESGIWELFIPGAHNGQLYKYEMIDANGNLRLKSDPYAFEAQMRPETASLICGLPEKVVQTEERKKANQFDAPISIYEVHLGSWRRHTDNNFWLSYRELADQLVPYAKWMGFTHLELLPINEHPFDGSWGYQPTGLYAPTRRFGTRDDFRYFIDAAHAAGLNVILDWVPGHFPTDDFALAEFDGTNLYEHSDPREGYHQDWNTLIYNYGRREVSNFLVGNALYWIERFGIDALRVDAVASMIYRDYSRKEGEWIPNEFGGRENLEAIEFLRNTNRILGEQVSGAVTMAEESTDFPGVSRPQDMGGLGFWYKWNLGWMHDTLDYMKLDPIYRQYHHDKLTFGMLYNYTENFVLPLSHDEVVHGKKSILDRMPGDAWQKFANLRAYYGWMWAFPGKKLLFMGNEFAQGREWNHDASLDWHLLEGGDNWHHGVQRLVRDLNHTYRHHKAMHELDFDPYGFEWLVVDDKERSVLIFVRRDKEGNEIIVASNFTPVPRHDYRFGINQPGKWREILNTDSMHYHGSNAGNGGAVHSDEIASHGRQHSLSLTLPPLATIWLVREAE.

The Nucleophile role is filled by aspartate 405. The Proton donor role is filled by glutamate 458.

Belongs to the glycosyl hydrolase 13 family. GlgB subfamily. Monomer.

The enzyme catalyses Transfers a segment of a (1-&gt;4)-alpha-D-glucan chain to a primary hydroxy group in a similar glucan chain.. It functions in the pathway glycan biosynthesis; glycogen biosynthesis. In terms of biological role, catalyzes the formation of the alpha-1,6-glucosidic linkages in glycogen by scission of a 1,4-alpha-linked oligosaccharide from growing alpha-1,4-glucan chains and the subsequent attachment of the oligosaccharide to the alpha-1,6 position. The protein is 1,4-alpha-glucan branching enzyme GlgB of Escherichia coli O1:K1 / APEC.